A 332-amino-acid chain; its full sequence is Ferrochelatase (332 aa).

The Fe cation site is built by His-201 and Glu-283.

This sequence belongs to the ferrochelatase family.

Its subcellular location is the cytoplasm. It catalyses the reaction heme b + 2 H(+) = protoporphyrin IX + Fe(2+). It participates in porphyrin-containing compound metabolism; protoheme biosynthesis; protoheme from protoporphyrin-IX: step 1/1. Functionally, catalyzes the ferrous insertion into protoporphyrin IX. This chain is Ferrochelatase, found in Francisella tularensis subsp. holarctica (strain FTNF002-00 / FTA).